An 874-amino-acid chain; its full sequence is Alanine--tRNA ligase (874 aa).

Residues histidine 562, histidine 566, cysteine 664, and histidine 668 each contribute to the Zn(2+) site.

The protein belongs to the class-II aminoacyl-tRNA synthetase family. It depends on Zn(2+) as a cofactor.

Its subcellular location is the cytoplasm. The enzyme catalyses tRNA(Ala) + L-alanine + ATP = L-alanyl-tRNA(Ala) + AMP + diphosphate. In terms of biological role, catalyzes the attachment of alanine to tRNA(Ala) in a two-step reaction: alanine is first activated by ATP to form Ala-AMP and then transferred to the acceptor end of tRNA(Ala). Also edits incorrectly charged Ser-tRNA(Ala) and Gly-tRNA(Ala) via its editing domain. This chain is Alanine--tRNA ligase, found in Shewanella putrefaciens (strain CN-32 / ATCC BAA-453).